The chain runs to 222 residues: Probable nicotinate-nucleotide adenylyltransferase (222 aa).

It belongs to the NadD family.

It catalyses the reaction nicotinate beta-D-ribonucleotide + ATP + H(+) = deamido-NAD(+) + diphosphate. Its pathway is cofactor biosynthesis; NAD(+) biosynthesis; deamido-NAD(+) from nicotinate D-ribonucleotide: step 1/1. Its function is as follows. Catalyzes the reversible adenylation of nicotinate mononucleotide (NaMN) to nicotinic acid adenine dinucleotide (NaAD). The sequence is that of Probable nicotinate-nucleotide adenylyltransferase from Xylella fastidiosa (strain M12).